Here is a 479-residue protein sequence, read N- to C-terminus: MSLVLKKSIDDVALKDKKVLIRVDFNVPVKNGEITNDFRIRSALPTIQKVLKEGGSCILMSHLGRPKGARMSDPKPEKGVRGYEEAATLRPVAAALSELLEKKVAFAPDCLNASIYVSKLKRGDVLLLENVRFYTEEGSKKEEEADAMAKVLASYADLYVSDAFGTAHRDSATMTGIPKVLGSGYAGYLMEKEINYFSRVLNNPPRPLVAIVGGAKVSDKIELLDNMLGRINYLVIGGAMAYTFQKAQGRKIGISMCEEDKLDLAKSLLKKAQERGVQVLLPVDHVCNKEFKAVDSPLVTEDVDVPDGYMALDIGPKTIHMYEEVIGRCKSAIWNGPMGVFEMPCYSKGTFAVAKAMGTGTQKDGLLSIIGGGDTASAAELSGEAKNMSHVSTGGGASLELLEGKTLPGVAILTDKEVKGRGPLLKCACGGASPSNESCPRRREGIWGGGFIVTEIVKLVGALLIGIFIGRRLNTKLIR.

Positions 23, 24, 25, 26, 39, 61, 62, 64, 65, 132, 168, and 169 each coordinate (2R)-3-phosphoglycerate. ADP contacts are provided by glycine 214 and alanine 215. CDP is bound at residue glycine 214. AMP contacts are provided by alanine 215 and lysine 216. Alanine 215 is an ATP binding site. Residue alanine 215 coordinates Mg(2+). Lysine 216 contacts (2R)-3-phosphoglycerate. Aspartate 219 provides a ligand contact to CDP. A Mg(2+)-binding site is contributed by aspartate 219. Positions 220 and 238 each coordinate ADP. An AMP-binding site is contributed by lysine 220. Position 220 (lysine 220) interacts with ATP. Position 238 (glycine 238) interacts with CDP. 2 residues coordinate AMP: alanine 239 and alanine 311. Alanine 239 and alanine 311 together coordinate ATP. ADP is bound by residues alanine 311 and asparagine 335. Residues glycine 336 and phenylalanine 341 each coordinate CDP. Phenylalanine 341, glutamate 342, aspartate 374, and threonine 375 together coordinate ADP. An AMP-binding site is contributed by glutamate 342. Positions 342, 374, and 375 each coordinate ATP. Aspartate 374 contributes to the Mg(2+) binding site.

It belongs to the phosphoglycerate kinase family. As to quaternary structure, monomer. The cofactor is Mg(2+).

Its subcellular location is the glycosome. The enzyme catalyses (2R)-3-phosphoglycerate + ATP = (2R)-3-phospho-glyceroyl phosphate + ADP. The protein operates within carbohydrate degradation; glycolysis; pyruvate from D-glyceraldehyde 3-phosphate: step 2/5. The protein is Phosphoglycerate kinase, glycosomal (PGKC) of Leishmania mexicana.